The following is a 63-amino-acid chain: Large ribosomal subunit protein bL28 (63 aa).

Belongs to the bacterial ribosomal protein bL28 family.

In Brachyspira hyodysenteriae (strain ATCC 49526 / WA1), this protein is Large ribosomal subunit protein bL28.